The following is a 1602-amino-acid chain: MAP kinase-activating death domain protein (1602 aa).

Positions 13-267 (YLVIVGARHP…VPVSGQKRVD (255 aa)) constitute a uDENN domain. Residues 105-121 (PKEKAEGGAGPRGKEGA) are compositionally biased toward basic and acidic residues. A disordered region spans residues 105–167 (PKEKAEGGAG…GKRRAKAGNR (63 aa)). Over residues 126–137 (ASEEAATESSES) the composition is skewed to low complexity. Polar residues predominate over residues 138–156 (GSTLQPPSADSTPDVNQSP). Ser155 is modified (phosphoserine). Basic residues predominate over residues 157–166 (RGKRRAKAGN). The cDENN domain maps to 288–428 (RFTLVDFPLH…ESLELKKHLK (141 aa)). In terms of domain architecture, dDENN spans 430 to 564 (ALASMSLNTQ…LNPSNYAFQR (135 aa)). 2 disordered regions span residues 603-635 (ALSV…SSYS) and 676-840 (QPQK…NSTE). Residues 614-629 (SDPTDDSGSDSMDYDD) show a composition bias toward acidic residues. 2 positions are modified to phosphoserine: Ser688 and Ser691. Polar residues predominate over residues 688 to 698 (SENSQENLPLR). A compositionally biased stretch (low complexity) spans 699 to 711 (SSSSTTASSSPST). A Phosphoserine modification is found at Ser778. Residues 789–803 (ESYTPRFSQHASGSR) are compositionally biased toward polar residues. 3 positions are modified to phosphoserine: Ser812, Ser817, and Ser819. The span at 826–839 (RASSPNSTVSNNST) shows a compositional bias: low complexity. Ser857, Ser861, Ser895, Ser900, and Ser909 each carry phosphoserine. Disordered regions lie at residues 870–920 (KGAR…SSEN), 1030–1089 (KEPD…DTRS), and 1113–1231 (TEEK…RSSE). A compositionally biased stretch (polar residues) spans 911-920 (QGRSSNSSEN). Ser1038 carries the phosphoserine modification. 2 positions are modified to phosphothreonine: Thr1040 and Thr1045. Position 1089 is a phosphoserine (Ser1089). Positions 1119–1134 (QISADSGVSLASASQR) are enriched in polar residues. The span at 1151-1162 (SSSQDSEVSNSS) shows a compositional bias: low complexity. The segment covering 1191–1209 (SRATLSDSEIETNSATSTI) has biased composition (polar residues). Thr1194 carries the phosphothreonine modification. A phosphoserine mark is found at Ser1196 and Ser1225. The Death domain maps to 1295-1370 (GMDQGPQEMI…GLVYSQQINE (76 aa)).

It belongs to the MADD family. In terms of assembly, interacts (via death domain) with TNFRSF1A (via death domain). Interacts with PIDD1. Interacts with YWHAZ. Interacts (via death domain) with KIF1B; links the motor KIF1B to Rab3-carrying vesicles in anterograde synaptic vesicle transport. Interacts with KIF1A. Interacts (via uDENN domain) with RAB3A, RAB3B, RAB3C and RAB3D; the GTP-bound form of the Rab proteins is preferred for interaction. In terms of tissue distribution, expressed in all tissues examined with the highest expression in brain.

It localises to the cell membrane. The protein localises to the cytoplasm. The protein resides in the cell projection. It is found in the axon. Guanyl-nucleotide exchange factor that regulates small GTPases of the Rab family. Converts GDP-bound inactive form of RAB27A and RAB27B to the GTP-bound active forms. Converts GDP-bound inactive form of RAB3A, RAB3C and RAB3D to the GTP-bound active forms, GTPases involved in synaptic vesicle exocytosis and vesicle secretion. Plays a role in synaptic vesicle formation and in vesicle trafficking at the neuromuscular junction. Involved in up-regulating a post-docking step of synaptic exocytosis in central synapses. Probably by binding to the motor proteins KIF1B and KIF1A, mediates motor-dependent transport of GTP-RAB3A-positive vesicles to the presynaptic nerve terminals. Plays a role in TNFA-mediated activation of the MAPK pathway, including ERK1/2. May link TNFRSF1A with MAP kinase activation. May be involved in the regulation of TNFA-induced apoptosis. In Rattus norvegicus (Rat), this protein is MAP kinase-activating death domain protein.